The sequence spans 360 residues: Putative F-box protein At1g65770 (360 aa).

Residues 2–50 (ADWSTLPVDLLNMIAGRLFSNIELKRFRSICRSWRSSVPGAGKKNPFRT) enclose the F-box domain.

In Arabidopsis thaliana (Mouse-ear cress), this protein is Putative F-box protein At1g65770.